Consider the following 703-residue polypeptide: Polyribonucleotide nucleotidyltransferase (703 aa).

2 residues coordinate Mg(2+): D482 and D488. Residues 549 to 607 (PKAQVMKIPEDKVGLVIGPAGKNIKYIKEQFGASVWIDGANAYINAPTIEAVNKAADFI) form the KH domain. Residues 617-679 (GGVYEGKVIR…EQNRLNLCSP (63 aa)) enclose the S1 motif domain. A disordered region spans residues 677–703 (CSPDYQKPENQERPRKEQLNRKPHHRK). Positions 682 to 696 (QKPENQERPRKEQLN) are enriched in basic and acidic residues.

Belongs to the polyribonucleotide nucleotidyltransferase family. It depends on Mg(2+) as a cofactor.

Its subcellular location is the cytoplasm. It catalyses the reaction RNA(n+1) + phosphate = RNA(n) + a ribonucleoside 5'-diphosphate. Involved in mRNA degradation. Catalyzes the phosphorolysis of single-stranded polyribonucleotides processively in the 3'- to 5'-direction. In Hydrogenobaculum sp. (strain Y04AAS1), this protein is Polyribonucleotide nucleotidyltransferase.